The chain runs to 784 residues: Alpha-catulin (784 aa).

Residues 35 to 247 (IKTKSIEQTL…LLLTASKTYL (213 aa)) are vinculin/alpha-catenin homology 1 (VH1) region. A coiled-coil region spans residues 387–414 (ASGLEVTVERLNRRLKDLSKQLQIVAME). The segment at 552 to 696 (PRPGKHGTTQ…MVKSPTVGKT (145 aa)) is vinculin/alpha-catenin homology 2 (VH2) region. Residues 737–784 (GSVNGRTGADGERTSRESTVWRRTPSIRRAAPPTSSHLSANNSSSIHI) form a disordered region. The segment covering 745–756 (ADGERTSRESTV) has biased composition (basic and acidic residues). The segment covering 771 to 784 (SSHLSANNSSSIHI) has biased composition (low complexity).

Belongs to the vinculin/alpha-catenin family. In terms of assembly, interacts with slo-1 (via C-terminus); the interaction is required for localization of slo-1 to dense bodies in body wall muscle cells. Interacts (via N-terminus) with dystrophin complex member dyb-1 (via C-terminus); the interaction is required for localization of the dystrophin complex and ctn-1 near dense bodies in muscle cells. Expressed in body wall muscles, vulval muscles, stomatointestinal cells and pharyngeal muscle cells. Expressed in enteric muscles, nerve ring neurons and in the ventral nerve cord.

Its subcellular location is the cytoplasm. Its function is as follows. Required for slo-1 potassium ion channel clustering at presynaptic terminals and in egg-laying muscles; clustering of slo-1 mediates the intoxicating and sedatory effects of ethanol on worms. Required for slo-1 localization to dense bodies in body wall muscle cells. Maintains the localization of the dystrophin complex near muscle cell dense bodies via its interaction with complex member dyb-1 which is required for slo-1 localization in muscle while slo-1 localization in neurons is independent of the dystrophin complex. The sequence is that of Alpha-catulin from Caenorhabditis elegans.